The sequence spans 227 residues: Cytochrome c oxidase subunit 2 (227 aa).

Residues 1-14 (MAYPLQLGLQDATS) lie on the Mitochondrial intermembrane side of the membrane. Residues 15–45 (PIMEELMNFHDHTLMIVFLISSLVLYVISSM) form a helical membrane-spanning segment. Over 46 to 59 (LTTKLTHTSTMDAQ) the chain is Mitochondrial matrix. Residues 60–87 (EVETIWTILPAVILIMIALPSLRILYMM) form a helical membrane-spanning segment. Over 88-227 (DEINNPVLTV…NFETWSVSMI (140 aa)) the chain is Mitochondrial intermembrane. Residues histidine 161, cysteine 196, glutamate 198, cysteine 200, histidine 204, and methionine 207 each contribute to the Cu cation site. Glutamate 198 contributes to the Mg(2+) binding site.

The protein belongs to the cytochrome c oxidase subunit 2 family. As to quaternary structure, component of the cytochrome c oxidase (complex IV, CIV), a multisubunit enzyme composed of 14 subunits. The complex is composed of a catalytic core of 3 subunits MT-CO1, MT-CO2 and MT-CO3, encoded in the mitochondrial DNA, and 11 supernumerary subunits COX4I, COX5A, COX5B, COX6A, COX6B, COX6C, COX7A, COX7B, COX7C, COX8 and NDUFA4, which are encoded in the nuclear genome. The complex exists as a monomer or a dimer and forms supercomplexes (SCs) in the inner mitochondrial membrane with NADH-ubiquinone oxidoreductase (complex I, CI) and ubiquinol-cytochrome c oxidoreductase (cytochrome b-c1 complex, complex III, CIII), resulting in different assemblies (supercomplex SCI(1)III(2)IV(1) and megacomplex MCI(2)III(2)IV(2)). Found in a complex with TMEM177, COA6, COX18, COX20, SCO1 and SCO2. Interacts with TMEM177 in a COX20-dependent manner. Interacts with COX20. Interacts with COX16. Requires Cu cation as cofactor.

It localises to the mitochondrion inner membrane. It carries out the reaction 4 Fe(II)-[cytochrome c] + O2 + 8 H(+)(in) = 4 Fe(III)-[cytochrome c] + 2 H2O + 4 H(+)(out). In terms of biological role, component of the cytochrome c oxidase, the last enzyme in the mitochondrial electron transport chain which drives oxidative phosphorylation. The respiratory chain contains 3 multisubunit complexes succinate dehydrogenase (complex II, CII), ubiquinol-cytochrome c oxidoreductase (cytochrome b-c1 complex, complex III, CIII) and cytochrome c oxidase (complex IV, CIV), that cooperate to transfer electrons derived from NADH and succinate to molecular oxygen, creating an electrochemical gradient over the inner membrane that drives transmembrane transport and the ATP synthase. Cytochrome c oxidase is the component of the respiratory chain that catalyzes the reduction of oxygen to water. Electrons originating from reduced cytochrome c in the intermembrane space (IMS) are transferred via the dinuclear copper A center (CU(A)) of subunit 2 and heme A of subunit 1 to the active site in subunit 1, a binuclear center (BNC) formed by heme A3 and copper B (CU(B)). The BNC reduces molecular oxygen to 2 water molecules using 4 electrons from cytochrome c in the IMS and 4 protons from the mitochondrial matrix. The chain is Cytochrome c oxidase subunit 2 (MT-CO2) from Malacothrix typica (Long-eared mouse).